We begin with the raw amino-acid sequence, 239 residues long: mRNA turnover protein 4 homolog (239 aa).

A disordered region spans residues 216–239; it reads QQMDDDLPESAPESEGESEEEDDS. Over residues 218–239 the composition is skewed to acidic residues; that stretch reads MDDDLPESAPESEGESEEEDDS. Phosphoserine is present on residues Ser-225, Ser-229, and Ser-233.

This sequence belongs to the universal ribosomal protein uL10 family. As to quaternary structure, associates with the pre-60S ribosomal particle. Interacts with MINAS-60 (product of an alternative open reading frame of RBM10).

Its subcellular location is the nucleus. The protein localises to the nucleolus. It localises to the cytoplasm. Component of the ribosome assembly machinery. Nuclear paralog of the ribosomal protein P0, it binds pre-60S subunits at an early stage of assembly in the nucleolus, and is replaced by P0 in cytoplasmic pre-60S subunits and mature 80S ribosomes. This is mRNA turnover protein 4 homolog (Mrto4) from Mus musculus (Mouse).